Reading from the N-terminus, the 451-residue chain is Chromosomal replication initiator protein DnaA (451 aa).

A domain I, interacts with DnaA modulators region spans residues 1-71; that stretch reads MSEKEIWDKV…QAIIYDVIGY (71 aa). The segment at 71–112 is domain II; it reads YEVKPHFISEDELASYNNVNTQEVQEPQVQHSSIDDKTWGKE. Residues 113–329 are domain III, AAA+ region; it reads QFNMHNTFDT…GALTRLLAYS (217 aa). 4 residues coordinate ATP: G157, G159, K160, and T161. The interval 330–451 is domain IV, binds dsDNA; the sequence is KLQGKPITTE…ENLEKEIRNQ (122 aa).

It belongs to the DnaA family. As to quaternary structure, oligomerizes as a right-handed, spiral filament on DNA at oriC.

The protein resides in the cytoplasm. Plays an essential role in the initiation and regulation of chromosomal replication. ATP-DnaA binds to the origin of replication (oriC) to initiate formation of the DNA replication initiation complex once per cell cycle. Binds the DnaA box (a 9 base pair repeat at the origin) and separates the double-stranded (ds)DNA. Forms a right-handed helical filament on oriC DNA; dsDNA binds to the exterior of the filament while single-stranded (ss)DNA is stabiized in the filament's interior. The ATP-DnaA-oriC complex binds and stabilizes one strand of the AT-rich DNA unwinding element (DUE), permitting loading of DNA polymerase. After initiation quickly degrades to an ADP-DnaA complex that is not apt for DNA replication. Binds acidic phospholipids. The sequence is that of Chromosomal replication initiator protein DnaA from Staphylococcus epidermidis (strain ATCC 35984 / DSM 28319 / BCRC 17069 / CCUG 31568 / BM 3577 / RP62A).